A 118-amino-acid chain; its full sequence is Basic phospholipase A2 PA-11 (118 aa).

7 disulfides stabilise this stretch: Cys-11–Cys-71, Cys-27–Cys-117, Cys-29–Cys-45, Cys-44–Cys-98, Cys-51–Cys-91, Cys-60–Cys-84, and Cys-78–Cys-89. Residues Tyr-28, Gly-30, and Gly-32 each contribute to the Ca(2+) site. His-48 is a catalytic residue. Asp-49 provides a ligand contact to Ca(2+). Asp-92 is an active-site residue.

It belongs to the phospholipase A2 family. Group I subfamily. D49 sub-subfamily. Requires Ca(2+) as cofactor. As to expression, expressed by the venom gland.

It localises to the secreted. The enzyme catalyses a 1,2-diacyl-sn-glycero-3-phosphocholine + H2O = a 1-acyl-sn-glycero-3-phosphocholine + a fatty acid + H(+). Functionally, PLA2 catalyzes the calcium-dependent hydrolysis of the 2-acyl groups in 3-sn-phosphoglycerides. This chain is Basic phospholipase A2 PA-11, found in Pseudechis australis (Mulga snake).